Reading from the N-terminus, the 191-residue chain is MAREPREGGRGGREREQGDDLVDKLVTINRVAKVVKGGRRFAFAALVVVGDQKGRVGYGAGKAREVPEAIRKATERAKRTMIRVPMKEGRTLHHDTFGHYGAGKVVVRAAEAGTGIIAGGPMRAVFESLGVNDVVAKSLGTRNPHNMIKATFAALEKASSPRHVASRRGKKAAELFGKREQGQTEAEVTNG.

Residues 21–84 (LVDKLVTINR…ERAKRTMIRV (64 aa)) enclose the S5 DRBM domain. Residues 161-191 (PRHVASRRGKKAAELFGKREQGQTEAEVTNG) are disordered. The span at 171–182 (KAAELFGKREQG) shows a compositional bias: basic and acidic residues.

The protein belongs to the universal ribosomal protein uS5 family. Part of the 30S ribosomal subunit. Contacts proteins S4 and S8.

Functionally, with S4 and S12 plays an important role in translational accuracy. Located at the back of the 30S subunit body where it stabilizes the conformation of the head with respect to the body. The polypeptide is Small ribosomal subunit protein uS5 (Gluconobacter oxydans (strain 621H) (Gluconobacter suboxydans)).